A 445-amino-acid chain; its full sequence is Protein phosphatase 2C 53 (445 aa).

In terms of domain architecture, PPM-type phosphatase spans 124 to 435; the sequence is LWGLESICGR…DNITVVVIDL (312 aa). Residues D180, G181, D362, and D426 each coordinate Mn(2+).

Belongs to the PP2C family. Interacts with PYL10, SAPK8 and SAPK10. Binding to PYL10 is dependent on the presence of abscisic acid (ABA). Interacts with PYL3, PYL5, PYL9 and PYL10. Binding to PYL9 and PYL10 is dependent on the presence of ABA. It depends on Mg(2+) as a cofactor. Mn(2+) is required as a cofactor. As to expression, expressed in leaf blades, leaf sheaths and lamina joints. Expressed at low levels in roots, stems, flowers and panicles.

The protein localises to the cytoplasm. It is found in the cytosol. It localises to the nucleus. The enzyme catalyses O-phospho-L-seryl-[protein] + H2O = L-seryl-[protein] + phosphate. The catalysed reaction is O-phospho-L-threonyl-[protein] + H2O = L-threonyl-[protein] + phosphate. With respect to regulation, repressed by abscisic acid-bound PYL1. Protein phosphatase that acts as a negative regulator of abscisic acid (ABA) signaling. Involved in the regulation of root architecture development and drought resistance. Can dephosphorylate SAPK8 and SAPK10 in vitro. Together with PYL10, SAPK8 and SAPK10, may form an ABA signaling module involved in stress response. This is Protein phosphatase 2C 53 from Oryza sativa subsp. japonica (Rice).